The primary structure comprises 253 residues: Negative modulator of initiation of replication (253 aa).

Positions 66–112 (SNQEQQTGHGHAGEPSAVQTPESNDYAKAQPHSSGYQPGQLEGHKSE) are disordered. Residues 154-155 (AV) are interaction with DNA.

The protein belongs to the SeqA family. Homodimer. Polymerizes to form helical filaments.

It is found in the cytoplasm. Functionally, negative regulator of replication initiation, which contributes to regulation of DNA replication and ensures that replication initiation occurs exactly once per chromosome per cell cycle. Binds to pairs of hemimethylated GATC sequences in the oriC region, thus preventing assembly of replication proteins and re-initiation at newly replicated origins. Repression is relieved when the region becomes fully methylated. This is Negative modulator of initiation of replication from Shewanella denitrificans (strain OS217 / ATCC BAA-1090 / DSM 15013).